The chain runs to 263 residues: Acyl-[acyl-carrier-protein]--UDP-N-acetylglucosamine O-acyltransferase (263 aa).

The protein belongs to the transferase hexapeptide repeat family. LpxA subfamily. Homotrimer.

Its subcellular location is the cytoplasm. The enzyme catalyses a (3R)-hydroxyacyl-[ACP] + UDP-N-acetyl-alpha-D-glucosamine = a UDP-3-O-[(3R)-3-hydroxyacyl]-N-acetyl-alpha-D-glucosamine + holo-[ACP]. The protein operates within glycolipid biosynthesis; lipid IV(A) biosynthesis; lipid IV(A) from (3R)-3-hydroxytetradecanoyl-[acyl-carrier-protein] and UDP-N-acetyl-alpha-D-glucosamine: step 1/6. Involved in the biosynthesis of lipid A, a phosphorylated glycolipid that anchors the lipopolysaccharide to the outer membrane of the cell. The sequence is that of Acyl-[acyl-carrier-protein]--UDP-N-acetylglucosamine O-acyltransferase from Stenotrophomonas maltophilia (strain K279a).